A 266-amino-acid chain; its full sequence is 3-methyl-2-oxobutanoate hydroxymethyltransferase 2 (266 aa).

2 residues coordinate Mg(2+): Asp45 and Asp84. Residues 45–46, Asp84, and Lys112 contribute to the 3-methyl-2-oxobutanoate site; that span reads DS. Glu114 serves as a coordination point for Mg(2+). The active-site Proton acceptor is Glu181.

This sequence belongs to the PanB family. Homodecamer; pentamer of dimers. Mg(2+) is required as a cofactor.

Its subcellular location is the cytoplasm. It carries out the reaction 3-methyl-2-oxobutanoate + (6R)-5,10-methylene-5,6,7,8-tetrahydrofolate + H2O = 2-dehydropantoate + (6S)-5,6,7,8-tetrahydrofolate. The protein operates within cofactor biosynthesis; (R)-pantothenate biosynthesis; (R)-pantoate from 3-methyl-2-oxobutanoate: step 1/2. Catalyzes the reversible reaction in which hydroxymethyl group from 5,10-methylenetetrahydrofolate is transferred onto alpha-ketoisovalerate to form ketopantoate. This is 3-methyl-2-oxobutanoate hydroxymethyltransferase 2 from Pseudomonas fluorescens (strain ATCC BAA-477 / NRRL B-23932 / Pf-5).